A 202-amino-acid chain; its full sequence is MFAYIRGRLEYKNNDFLIVESNGVGYRIFTSLSTISGIGEIGQEVKVYTYLYVREDVISLYGFLTQEELNVFELLISVSGVGPKAAVSVLSAISPSRFSLAVITDDVKTLTKAQGIGKKIAQRIILELKDKIKKEQLTEYAQSEEGGKVLDTDSSKMAEAVSALMVLGYSPAEANKAVSAVYREDMDIETIIKNALKGLARP.

The domain I stretch occupies residues 1–64; sequence MFAYIRGRLE…EDVISLYGFL (64 aa). Positions 65–143 are domain II; sequence TQEELNVFEL…KEQLTEYAQS (79 aa). The segment at 144–152 is flexible linker; the sequence is EEGGKVLDT. The interval 152–202 is domain III; it reads TDSSKMAEAVSALMVLGYSPAEANKAVSAVYREDMDIETIIKNALKGLARP.

The protein belongs to the RuvA family. In terms of assembly, homotetramer. Forms an RuvA(8)-RuvB(12)-Holliday junction (HJ) complex. HJ DNA is sandwiched between 2 RuvA tetramers; dsDNA enters through RuvA and exits via RuvB. An RuvB hexamer assembles on each DNA strand where it exits the tetramer. Each RuvB hexamer is contacted by two RuvA subunits (via domain III) on 2 adjacent RuvB subunits; this complex drives branch migration. In the full resolvosome a probable DNA-RuvA(4)-RuvB(12)-RuvC(2) complex forms which resolves the HJ.

The protein localises to the cytoplasm. Functionally, the RuvA-RuvB-RuvC complex processes Holliday junction (HJ) DNA during genetic recombination and DNA repair, while the RuvA-RuvB complex plays an important role in the rescue of blocked DNA replication forks via replication fork reversal (RFR). RuvA specifically binds to HJ cruciform DNA, conferring on it an open structure. The RuvB hexamer acts as an ATP-dependent pump, pulling dsDNA into and through the RuvAB complex. HJ branch migration allows RuvC to scan DNA until it finds its consensus sequence, where it cleaves and resolves the cruciform DNA. This is Holliday junction branch migration complex subunit RuvA from Acetivibrio thermocellus (strain ATCC 27405 / DSM 1237 / JCM 9322 / NBRC 103400 / NCIMB 10682 / NRRL B-4536 / VPI 7372) (Clostridium thermocellum).